Reading from the N-terminus, the 370-residue chain is Pituitary-specific positive transcription factor 1 (370 aa).

The 9aaTAD signature appears at 5–13 (AFASSDNFV). The 75-residue stretch at 202 to 276 (MDSPEIRELE…ILSKWLEEAE (75 aa)) folds into the POU-specific domain. Positions 292–351 (KRKRRTTISIAAKEALERHFGEQSKPSSQEIMRMAEGLNLEKEVVRVWFCNRRQREKRVK) form a DNA-binding region, homeobox.

It belongs to the POU transcription factor family. Class-1 subfamily. As to expression, pituitary gland.

The protein localises to the nucleus. In terms of biological role, transcription factor that activates growth hormone and prolactin genes. Specifically binds to the consensus sequence 5'-TAAAT-3'. The polypeptide is Pituitary-specific positive transcription factor 1 (POU1F1) (Meleagris gallopavo (Wild turkey)).